The chain runs to 448 residues: Maintenance of mitochondrial morphology protein 1 (448 aa).

The Lumenal segment spans residues 1-74; it reads MTESVIYSGT…LNHTWSFTQG (74 aa). A helical transmembrane segment spans residues 75 to 95; that stretch reads LVVGQLSVIVVVAIFIKFFVF. At 96 to 448 the chain is on the cytoplasmic side; it reads ADSSATTTTT…IVDKTEEASI (353 aa). Disordered regions lie at residues 119-144 and 303-357; these read RNKN…LNSP and LQNV…SQED. Over residues 127-140 the composition is skewed to basic and acidic residues; it reads SNEDKDPNNNKEDD. The SMP-LTD domain maps to 164–419; it reads SPESLDWFNV…EPRFQVVKVP (256 aa). Residues 313-332 show a composition bias toward low complexity; it reads PSNEPNSQNQTQQPTPVNNS. The span at 345–356 shows a compositional bias: basic and acidic residues; that stretch reads ETKHSKAKRSQE.

The protein belongs to the MMM1 family. In terms of assembly, homodimer. Component of the ER-mitochondria encounter structure (ERMES) or MDM complex, composed of MMM1, MDM10, MDM12 and MDM34. An MMM1 homodimer associates with one molecule of MDM12 on each side in a pairwise head-to-tail manner, and the SMP-LTD domains of MMM1 and MDM12 generate a continuous hydrophobic tunnel for phospholipid trafficking.

It localises to the endoplasmic reticulum membrane. In terms of biological role, component of the ERMES/MDM complex, which serves as a molecular tether to connect the endoplasmic reticulum (ER) and mitochondria. Components of this complex are involved in the control of mitochondrial shape and protein biogenesis, and function in nonvesicular lipid trafficking between the ER and mitochondria. The MDM12-MMM1 subcomplex functions in the major beta-barrel assembly pathway that is responsible for biogenesis of all outer membrane beta-barrel proteins, and acts in a late step after the SAM complex. The MDM10-MDM12-MMM1 subcomplex further acts in the TOM40-specific pathway after the action of the MDM12-MMM1 complex. Essential for establishing and maintaining the structure of mitochondria and maintenance of mtDNA nucleoids. The chain is Maintenance of mitochondrial morphology protein 1 from Debaryomyces hansenii (strain ATCC 36239 / CBS 767 / BCRC 21394 / JCM 1990 / NBRC 0083 / IGC 2968) (Yeast).